The following is a 198-amino-acid chain: MRAPAQVRTLRWSLGWPGSRGRDVFAALRCAQALRCQPLGSALPPQAPTRDLGRPQAFDSSRTPGPRPPRSTLRMMETKSPTSPSYGARGKVPPGAGPGSPLSRGAGQGAPLSETRFHHVAQAFLKLLSSSNPPTSASESARIIGVSHCTQPQVASLSDRHCSKVNHTVLSPRKGVPLQLTAAHSSSQEVLATVPFHG.

Residues 40-111 are disordered; it reads GSALPPQAPT…LSRGAGQGAP (72 aa). The span at 60-74 shows a compositional bias: low complexity; it reads SSRTPGPRPPRSTLR.

This is an uncharacterized protein from Homo sapiens (Human).